Here is a 259-residue protein sequence, read N- to C-terminus: Short chain dehydrogenase ausX (259 aa).

NADP(+) is bound by residues Ile-13, Asp-59, Arg-121, Tyr-153, Lys-157, and Val-186. Tyr-153 acts as the Proton acceptor in catalysis. The active-site Proton donor is the Tyr-153. The active-site Lowers pKa of active site Tyr is Lys-157.

This sequence belongs to the short-chain dehydrogenases/reductases (SDR) family.

It functions in the pathway secondary metabolite biosynthesis; terpenoid biosynthesis. In terms of biological role, short chain dehydrogenase; part of the gene cluster A that mediates the biosynthesis of the fungal meroterpenoid acetoxydehydroaustin. The first step of the pathway is the synthesis of 3,5-dimethylorsellinic acid by the polyketide synthase ausA. 3,5-dimethylorsellinic acid is then prenylated by the polyprenyl transferase ausN. Further epoxidation by the FAD-dependent monooxygenase ausM and cyclization by the probable terpene cyclase ausL lead to the formation of protoaustinoid A. Protoaustinoid A is then oxidized to spiro-lactone preaustinoid A3 by the combined action of the FAD-binding monooxygenases ausB and ausC, and the dioxygenase ausE. Acid-catalyzed keto-rearrangement and ring contraction of the tetraketide portion of preaustinoid A3 by ausJ lead to the formation of preaustinoid A4. The aldo-keto reductase ausK, with the help of ausH, is involved in the next step by transforming preaustinoid A4 into isoaustinone which is in turn hydroxylated by the P450 monooxygenase ausI to form austinolide. The cytochrome P450 monooxygenase ausG then modifies austinolide to austinol. Austinol is further acetylated to austin by the O-acetyltransferase ausP, which spontaneously changes to dehydroaustin. The cytochrome P450 monooxygenase then converts dehydroaustin is into 7-dehydrodehydroaustin. The hydroxylation catalyzed by ausR permits the second O-acetyltransferase ausQ to add an additional acetyl group to the molecule, leading to the formation of acetoxydehydroaustin. Due to genetic rearrangements of the clusters and the subsequent loss of some enzymes, the end product of the Penicillium brasilianum austinoid biosynthesis clusters is acetoxydehydroaustin. This chain is Short chain dehydrogenase ausX, found in Penicillium brasilianum.